The chain runs to 404 residues: Cysteine desulfurase IscS (404 aa).

Pyridoxal 5'-phosphate contacts are provided by residues 75–76, Asn-155, Gln-183, and 203–205; these read AT and SGH. Lys-206 is subject to N6-(pyridoxal phosphate)lysine. A pyridoxal 5'-phosphate-binding site is contributed by Thr-243. Residue Cys-328 is the Cysteine persulfide intermediate of the active site. Cys-328 is a [2Fe-2S] cluster binding site.

This sequence belongs to the class-V pyridoxal-phosphate-dependent aminotransferase family. NifS/IscS subfamily. Homodimer. Forms a heterotetramer with IscU, interacts with other sulfur acceptors. Pyridoxal 5'-phosphate is required as a cofactor.

The protein localises to the cytoplasm. It carries out the reaction (sulfur carrier)-H + L-cysteine = (sulfur carrier)-SH + L-alanine. It participates in cofactor biosynthesis; iron-sulfur cluster biosynthesis. Its function is as follows. Master enzyme that delivers sulfur to a number of partners involved in Fe-S cluster assembly, tRNA modification or cofactor biosynthesis. Catalyzes the removal of elemental sulfur and selenium atoms from cysteine and selenocysteine to produce alanine. Functions as a sulfur delivery protein for Fe-S cluster synthesis onto IscU, an Fe-S scaffold assembly protein, as well as other S acceptor proteins. Also functions as a selenium delivery protein in the pathway for the biosynthesis of selenophosphate. The chain is Cysteine desulfurase IscS from Salmonella typhi.